A 173-amino-acid polypeptide reads, in one-letter code: Alpha-crystallin A chain (173 aa).

Met-1 bears the N-acetylmethionine mark. The interval Met-1–Glu-63 is required for complex formation with BFSP1 and BFSP2. Gln-6 is subject to Deamidated glutamine; partial. Ser-45 is modified (phosphoserine). Position 50 is a deamidated glutamine; partial (Gln-50). The sHSP domain maps to Leu-52–Ser-162. Position 70 is an N6-acetyllysine (Lys-70). His-79 lines the Zn(2+) pocket. Residue Gln-90 is modified to Deamidated glutamine; partial. An N6-acetyllysine modification is found at Lys-99. His-100 contacts Zn(2+). Deamidated asparagine; partial is present on Asn-101. Positions 102 and 107 each coordinate Zn(2+). At Ser-122 the chain carries Phosphoserine. Residue Asn-123 is modified to Deamidated asparagine; partial. Residues Pro-144–Ser-173 are disordered. Residues Gly-153–Pro-167 are compositionally biased toward basic and acidic residues. His-154 contacts Zn(2+). Ser-162 is a glycosylation site (O-linked (GlcNAc) serine).

This sequence belongs to the small heat shock protein (HSP20) family. As to quaternary structure, heteromer composed of three CRYAA and one CRYAB subunits. Inter-subunit bridging via zinc ions enhances stability, which is crucial as there is no protein turn over in the lens. Can also form homodimers and homotetramers (dimers of dimers) which serve as the building blocks of homooligomers. Within homooligomers, the zinc-binding motif is created from residues of 3 different molecules. His-100 and Glu-102 from one molecule are ligands of the zinc ion, and His-107 and His-154 residues from additional molecules complete the site with tetrahedral coordination geometry. Part of a complex required for lens intermediate filament formation composed of BFSP1, BFSP2 and CRYAA. Acetylation at Lys-70 may increase chaperone activity. Post-translationally, undergoes age-dependent proteolytical cleavage at the C-terminus.

The protein resides in the cytoplasm. Its subcellular location is the nucleus. Its function is as follows. Contributes to the transparency and refractive index of the lens. Acts as a chaperone, preventing aggregation of various proteins under a wide range of stress conditions. Required for the correct formation of lens intermediate filaments as part of a complex composed of BFSP1, BFSP2 and CRYAA. The protein is Alpha-crystallin A chain (CRYAA) of Sus scrofa (Pig).